Here is a 343-residue protein sequence, read N- to C-terminus: Phosphoribosylformylglycinamidine cyclo-ligase (343 aa).

It belongs to the AIR synthase family.

Its subcellular location is the cytoplasm. It carries out the reaction 2-formamido-N(1)-(5-O-phospho-beta-D-ribosyl)acetamidine + ATP = 5-amino-1-(5-phospho-beta-D-ribosyl)imidazole + ADP + phosphate + H(+). It functions in the pathway purine metabolism; IMP biosynthesis via de novo pathway; 5-amino-1-(5-phospho-D-ribosyl)imidazole from N(2)-formyl-N(1)-(5-phospho-D-ribosyl)glycinamide: step 2/2. This is Phosphoribosylformylglycinamidine cyclo-ligase from Staphylococcus epidermidis (strain ATCC 35984 / DSM 28319 / BCRC 17069 / CCUG 31568 / BM 3577 / RP62A).